Reading from the N-terminus, the 1239-residue chain is Erythroid differentiation-related factor 1 (1239 aa).

4 disordered regions span residues 1–39 (MGDP…QGSA), 219–269 (AQPV…REPL), 517–559 (PKKE…DPAD), and 620–646 (KKES…TRGG). 2 stretches are compositionally biased toward low complexity: residues 9–28 (AEAS…LSQA) and 253–263 (SSVSEDPSASS). Residues 530–547 (NSDESYSEEEEEMADSDE) are compositionally biased toward acidic residues. 2 TPR repeats span residues 693 to 726 (SKAY…HDTY) and 914 to 953 (AQAH…LGTR).

The protein resides in the nucleus. In terms of biological role, transcription factor involved in erythroid differentiation. Involved in transcriptional activation of the globin gene. In Mus musculus (Mouse), this protein is Erythroid differentiation-related factor 1 (Edrf1).